A 290-amino-acid polypeptide reads, in one-letter code: MGTEDAIALPNSTLEPRTEAKQRLSSKSHQVSAKVTIPAKEEISSSDDDAHVPVTEIHLKSHEWFGDFITKHEIPRKVFHSSIGFITLYLYTQGINYKNVLWPLIYAFIILFILDLIRLNWPFFNMLYCRTVGALMRKKEIHTYNGVLWYILGLIFSFNFFSKDVTLISLFLLSWSDTAAATIGRKYGHLTPKVARNKSLAGSIAAFTVGVITCWVFYGYFVPAYSYVNKPGEIQWSPETSRLSLNMLSLLGGVVAALSEGIDLFNWDDNFTIPVLSSLFMNAVIKTFKK.

The tract at residues 1-33 (MGTEDAIALPNSTLEPRTEAKQRLSSKSHQVSA) is disordered. Residues 1 to 77 (MGTEDAIALP…FITKHEIPRK (77 aa)) are Lumenal-facing. N-linked (GlcNAc...) asparagine glycosylation is present at Asn11. A compositionally biased stretch (polar residues) spans 23–33 (RLSSKSHQVSA). Phosphoserine is present on residues Ser44, Ser45, and Ser46. Residues 78-95 (VFHSSIGFITLYLYTQGI) traverse the membrane as a helical segment. The Cytoplasmic portion of the chain corresponds to 96–103 (NYKNVLWP). The helical transmembrane segment at 104–124 (LIYAFIILFILDLIRLNWPFF) threads the bilayer. Over 125–140 (NMLYCRTVGALMRKKE) the chain is Lumenal. A helical membrane pass occupies residues 141 to 161 (IHTYNGVLWYILGLIFSFNFF). Residues 162–163 (SK) are Cytoplasmic-facing. A helical transmembrane segment spans residues 164–184 (DVTLISLFLLSWSDTAAATIG). Topologically, residues 185-203 (RKYGHLTPKVARNKSLAGS) are lumenal. A glycan (N-linked (GlcNAc...) asparagine) is linked at Asn197. A helical membrane pass occupies residues 204–224 (IAAFTVGVITCWVFYGYFVPA). The Cytoplasmic segment spans residues 225-244 (YSYVNKPGEIQWSPETSRLS). The chain crosses the membrane as a helical span at residues 245–265 (LNMLSLLGGVVAALSEGIDLF). Residues 266–290 (NWDDNFTIPVLSSLFMNAVIKTFKK) lie on the Lumenal side of the membrane. Asn270 carries an N-linked (GlcNAc...) asparagine glycan.

Belongs to the DGK1 family. The cofactor is Ca(2+). It depends on Mg(2+) as a cofactor. Post-translationally, CKII-mediated phosphorylation of Ser-45 and Ser-46 regulates its function in the production of PA.

Its subcellular location is the endoplasmic reticulum membrane. It is found in the nucleus membrane. It carries out the reaction a 1,2-diacyl-sn-glycerol + CTP = a 1,2-diacyl-sn-glycero-3-phosphate + CDP + H(+). It catalyses the reaction 1,2-di-(9Z-octadecenoyl)-sn-glycerol + CTP = 1,2-di-(9Z-octadecenoyl)-sn-glycero-3-phosphate + CDP + H(+). Inhibited by N-ethylmaleimide, dCTP, and sphingoid bases including sphinganine, sphingosine and phytosphingosine. DAG pyrophosphate, cardiolipin, CDP-DAG, and lyso-PA inhibited activity by 23-66%. Also inhibited by Ca(2+) concentrations of more than 1 mM, by addition of EDTA or EGTA at 5 mM, and by 5 mM Mn(2+) and Zn(2+). Stimulated by major membrane phospholipids including phosphatidylcholine, phosphatidylethanolamine, phosphatidylinositol, phosphatidylserine, phosphatidylglycerol, and phosphatidate. Also stimulated to a maximum by addition of TritonX-100 at a concentration of 1 mM, followed by an apparent inhibition of activity at concentrations above 1 mM. In terms of biological role, CTP-dependent diacylglycerol kinase that catalyzes the phosphorylation of diacylglycerol (DAG) to phosphatidate (PA). Controls phosphatidate levels at the nuclear envelope. Counteracts the activity of PA phosphatase PAH1/SMP2, controlling the levels of PA and DAG for the synthesis of triacylglycerol and membrane phospholipids. May be involved in vesicle trafficking between the endoplasmic reticulum and the Golgi apparatus. Required to convert triacylglycerol-derived DAG to PA for phospholipid synthesis during growth resumption from stationary phase in the absence of de novo fatty acid synthesis. Involved in the resistance to nickel chloride and nalidixic acid. The chain is CTP-dependent diacylglycerol kinase 1 (DGK1) from Saccharomyces cerevisiae (strain ATCC 204508 / S288c) (Baker's yeast).